We begin with the raw amino-acid sequence, 79 residues long: Small ribosomal subunit protein bS18 (79 aa).

It belongs to the bacterial ribosomal protein bS18 family. As to quaternary structure, part of the 30S ribosomal subunit. Forms a tight heterodimer with protein bS6.

Its function is as follows. Binds as a heterodimer with protein bS6 to the central domain of the 16S rRNA, where it helps stabilize the platform of the 30S subunit. This is Small ribosomal subunit protein bS18 from Rhodopseudomonas palustris (strain BisB18).